The following is a 404-amino-acid chain: Adenylosuccinate synthetase (404 aa).

Residues 12-18 and 40-42 each bind GTP; these read GDEGKGK and GHT. Asp-13 acts as the Proton acceptor in catalysis. Residues Asp-13 and Gly-40 each contribute to the Mg(2+) site. IMP-binding positions include 13-16, 38-41, Thr-121, Arg-135, Gln-213, Thr-228, and Arg-296; these read DEGK and NAGH. The active-site Proton donor is His-41. Substrate is bound at residue 292–298; sequence TTTGRAR. GTP contacts are provided by residues Arg-298, 324 to 326, and 389 to 391; these read KMD and SCG.

The protein belongs to the adenylosuccinate synthetase family. In terms of assembly, homodimer. Mg(2+) serves as cofactor.

Its subcellular location is the cytoplasm. The catalysed reaction is IMP + L-aspartate + GTP = N(6)-(1,2-dicarboxyethyl)-AMP + GDP + phosphate + 2 H(+). It functions in the pathway purine metabolism; AMP biosynthesis via de novo pathway; AMP from IMP: step 1/2. In terms of biological role, plays an important role in the de novo pathway of purine nucleotide biosynthesis. Catalyzes the first committed step in the biosynthesis of AMP from IMP. The chain is Adenylosuccinate synthetase from Deinococcus geothermalis (strain DSM 11300 / CIP 105573 / AG-3a).